Here is an 822-residue protein sequence, read N- to C-terminus: MDHSDVYEPYTFSGKHHVRMYDFSKLTPMWNKDASTPPRKFADMHIASTVAMELYNIERELLNMGHLSGMETMMVDVRKSPEMIPSTINMRDHITRLVNKMKPICRFDERLYSLCGELVHLRIELREVPLDTWLLSKKLNLKYEVVDNIRRYRAHIEMDMLRFYGSIHPWLKRLGLQSALKYEEYLVELEDGKKESLCQFFVRLAAAAATEASMKKPFMTTLTTGVANWRTTFTTFFLALANQLFVPSTPCMLFLGREGTSTASCYLMDPRTNNTQDTLKAITEDVVPHLLARGGIGISLQHLNGKFGLMHVMKVLDSLVMAANVNESRPTGICVYLEPWHADIMSALNMRGMVAAEESRRCDNVFLALWSCDLLFKRYLRHVNGEKNVIWTLFDSRASILTKLHSEEFEKEYERLESEGLGVASIPIRDMMFAIIKSAASTGSPFILFKDACNRHYITNTQGDAIAGSNLCTEIIQKTDANTNGVCSLASINLARCVRNIDGNRQFDFDALRYAVRLATVFVNAIMEGSDVPTEKSHSGRERNRSMGIGVQGFHTAFLSMGLDLCDERARSLNKLIFEFMLLEAMTVSCEFCERGLPPFADFSNSYYARGRLHFDGWANVELAAVEEWNMLRDRIVSAGLYNAQFIALMPTAASAQVTEVSEGFSPLFSNMFSKVTSTGELLRPNIQLMEELRTIYLDNENQRLATIAALESANWNIQTALGNKPECHSLLKYKTAFDYDQALLIDLCSDRAPFVDQSQSMTLFITETADGTLLASRVMNLLLHAYKAGLKTGMYYCKIRKATNAGVFCGDGELTCSSCVL.

Substrate-binding positions include threonine 249, 264 to 265 (SC), glycine 295, 470 to 474 (NLCTE), and 651 to 655 (PTAAS). The cysteines at positions 265 and 487 are disulfide-linked. Asparagine 470 functions as the Proton acceptor in the catalytic mechanism. Cysteine 472 (cysteine radical intermediate) is an active-site residue. Residue glutamate 474 is the Proton acceptor of the active site.

It belongs to the ribonucleoside diphosphate reductase large chain family. In terms of assembly, heterotetramer composed of a homodimer of the large subunit (R1) and a homodimer of the small subunit (R2). Larger multisubunit protein complex are also active, composed of (R1)n(R2)n.

It carries out the reaction a 2'-deoxyribonucleoside 5'-diphosphate + [thioredoxin]-disulfide + H2O = a ribonucleoside 5'-diphosphate + [thioredoxin]-dithiol. Functionally, ribonucleoside-diphosphate reductase holoenzyme provides the precursors necessary for viral DNA synthesis. Allows virus growth in non-dividing cells, as well as reactivation from latency in infected hosts. Catalyzes the biosynthesis of deoxyribonucleotides from the corresponding ribonucleotides. The protein is Ribonucleoside-diphosphate reductase large subunit of Gallus gallus (Chicken).